Reading from the N-terminus, the 375-residue chain is DNA replication and repair protein RecF (375 aa).

30-37 (GENAQGKT) is an ATP binding site.

It belongs to the RecF family.

Its subcellular location is the cytoplasm. Its function is as follows. The RecF protein is involved in DNA metabolism; it is required for DNA replication and normal SOS inducibility. RecF binds preferentially to single-stranded, linear DNA. It also seems to bind ATP. The chain is DNA replication and repair protein RecF from Enterococcus faecalis (strain ATCC 700802 / V583).